We begin with the raw amino-acid sequence, 113 residues long: Protein FPV195 (113 aa).

It belongs to the poxviruses A31 family.

This chain is Protein FPV195, found in Vertebrata (FPV).